Consider the following 492-residue polypeptide: Pre-mRNA-processing factor 19 (492 aa).

In terms of domain architecture, U-box spans 1–72 (MSFVCGISGE…APRNVSGTSI (72 aa)). 6 WD repeats span residues 207–246 (HSTGTPGITALDIKGNLSLTGGIDKTVVLYDYEKEQVMQT), 249–288 (GHNKKINAVVLHPDNITAISASADSHIRVWSATDSSSKAI), 291–330 (VHQAPVTDISLNASGDYILSASDDSYWAFSDIRSGKSLCK), 336–375 (GSQIAVHSIEFHPDGLIFGTGAADAVVKIWDLKNQTVAAA), 378–417 (GHTAAVRSIAFSENGYYLATGSEDGEVKLWDLRKLKNLKT), and 461–491 (DHSGPVTGVRFGENARSLVTCSLDKSLRVFS).

This sequence belongs to the WD repeat PRP19 family. Homotetramer. Component of the NTC complex (or PRP19-associated complex) which is associated with the spliceosome.

The protein localises to the nucleus. The protein resides in the nucleoplasm. The catalysed reaction is S-ubiquitinyl-[E2 ubiquitin-conjugating enzyme]-L-cysteine + [acceptor protein]-L-lysine = [E2 ubiquitin-conjugating enzyme]-L-cysteine + N(6)-ubiquitinyl-[acceptor protein]-L-lysine.. The protein operates within protein modification; protein ubiquitination. Functionally, probable ubiquitin-protein ligase which is mainly involved pre-mRNA splicing and DNA repair. Core component of the NTC/Nineteen complex which is part of the spliceosome and participates in its assembly, its remodeling and is required for its activity. Together with emb-4, necessary for interaction of rnp-4, a probable exon junction complex component, with mRNAs and spliceosomal snRNAs. Plays a role in nuclear retention of unspliced mRNAs. The polypeptide is Pre-mRNA-processing factor 19 (prp-19) (Caenorhabditis elegans).